The sequence spans 292 residues: tRNA dimethylallyltransferase (292 aa).

10 to 17 lines the ATP pocket; sequence GPTASGKS. 12–17 provides a ligand contact to substrate; the sequence is TASGKS. Interaction with substrate tRNA stretches follow at residues 35 to 38 and 159 to 163; these read DSMQ and QRIVR.

This sequence belongs to the IPP transferase family. As to quaternary structure, monomer. Requires Mg(2+) as cofactor.

It carries out the reaction adenosine(37) in tRNA + dimethylallyl diphosphate = N(6)-dimethylallyladenosine(37) in tRNA + diphosphate. Functionally, catalyzes the transfer of a dimethylallyl group onto the adenine at position 37 in tRNAs that read codons beginning with uridine, leading to the formation of N6-(dimethylallyl)adenosine (i(6)A). The chain is tRNA dimethylallyltransferase from Chelativorans sp. (strain BNC1).